The sequence spans 219 residues: Histone H1.11R (219 aa).

Composition is skewed to low complexity over residues 1 to 20 and 28 to 40; these read MAET…AAKA and AAGG…PAGP. Disordered stretches follow at residues 1–42 and 89–219; these read MAET…GPSV and LVSK…AKKK. Residues 38–111 form the H15 domain; sequence AGPSVTELIT…GASGSFRLSK (74 aa). 4 stretches are compositionally biased toward basic residues: residues 121 to 135, 143 to 160, 168 to 183, and 192 to 219; these read PKKK…KAAA, KKPK…KAKK, KSVK…KKAV, and KAVK…AKKK.

This sequence belongs to the histone H1/H5 family.

It is found in the nucleus. The protein localises to the chromosome. Its function is as follows. Histones H1 are necessary for the condensation of nucleosome chains into higher-order structures. This Gallus gallus (Chicken) protein is Histone H1.11R.